We begin with the raw amino-acid sequence, 263 residues long: Zinc transporter ZupT (263 aa).

The next 5 helical transmembrane spans lie at 1-21, 37-57, 68-88, 116-136, and 138-158; these read MLFA…GGLI, LGFS…PGAF, GGSW…AIID, MMKM…PEGF, and TFLA…AIAI. Residues asparagine 131 and glutamate 134 each coordinate Fe(2+). Glutamate 134 contributes to the Zn(2+) binding site. Residue histidine 159 coordinates Zn(2+). Residues asparagine 160, glutamate 163, and glutamate 192 each coordinate Fe(2+). Zn(2+) is bound at residue glutamate 163. A run of 3 helical transmembrane segments spans residues 184–204, 206–226, and 243–263; these read WATL…LLLM, FIGP…MVFI, and TAIY…LLFI.

This sequence belongs to the ZIP transporter (TC 2.A.5) family. ZupT subfamily.

The protein resides in the cell membrane. The enzyme catalyses Zn(2+)(in) = Zn(2+)(out). In terms of biological role, mediates zinc uptake. May also transport other divalent cations. This chain is Zinc transporter ZupT, found in Corynebacterium glutamicum (strain ATCC 13032 / DSM 20300 / JCM 1318 / BCRC 11384 / CCUG 27702 / LMG 3730 / NBRC 12168 / NCIMB 10025 / NRRL B-2784 / 534).